The sequence spans 96 residues: Neutrophil defensin 8 (96 aa).

Residues 1–19 form the signal peptide; that stretch reads MRTLVILAAILLVALQAQA. The propeptide occupies 20-66; that stretch reads EPLQARTDEATAAQEQIPTDNPEVVVSLAWDESLAPKDSVPGLRKNM. Disulfide bonds link Cys-68–Cys-96, Cys-70–Cys-85, and Cys-75–Cys-95.

This sequence belongs to the alpha-defensin family.

The protein resides in the secreted. In terms of biological role, probable antibiotic and antifungal activity. This Macaca mulatta (Rhesus macaque) protein is Neutrophil defensin 8.